The primary structure comprises 310 residues: Homoserine kinase (310 aa).

Position 91–101 (91–101 (PIGSGLGSSAC)) interacts with ATP.

It belongs to the GHMP kinase family. Homoserine kinase subfamily.

The protein resides in the cytoplasm. It catalyses the reaction L-homoserine + ATP = O-phospho-L-homoserine + ADP + H(+). The protein operates within amino-acid biosynthesis; L-threonine biosynthesis; L-threonine from L-aspartate: step 4/5. In terms of biological role, catalyzes the ATP-dependent phosphorylation of L-homoserine to L-homoserine phosphate. In Escherichia coli O81 (strain ED1a), this protein is Homoserine kinase.